The primary structure comprises 121 residues: UPF0344 protein BT9727_1053 (121 aa).

The next 4 membrane-spanning stretches (helical) occupy residues 6–26 (ITAWALGLILFFVAYSLYSAG), 38–58 (LMYIIIIVTGFMLYMGIMKTA), 65–85 (WYGLKMIAGILVIGGMEMVLV), and 92–112 (ATGAVWGLFIVALVAVFYLGL).

This sequence belongs to the UPF0344 family.

It is found in the cell membrane. This chain is UPF0344 protein BT9727_1053, found in Bacillus thuringiensis subsp. konkukian (strain 97-27).